The following is a 320-amino-acid chain: Cytochrome c biogenesis protein CcsA (320 aa).

8 helical membrane passes run I13 to V33, G46 to G66, L73 to L93, L102 to L122, M147 to I167, I226 to N246, E259 to H274, and V289 to I309.

It belongs to the CcmF/CycK/Ccl1/NrfE/CcsA family. As to quaternary structure, may interact with Ccs1.

The protein localises to the plastid. Its subcellular location is the chloroplast thylakoid membrane. Functionally, required during biogenesis of c-type cytochromes (cytochrome c6 and cytochrome f) at the step of heme attachment. This Gossypium hirsutum (Upland cotton) protein is Cytochrome c biogenesis protein CcsA.